A 503-amino-acid chain; its full sequence is EZH inhibitory protein (503 aa).

A compositionally biased stretch (basic and acidic residues) spans M1–D16. Disordered regions lie at residues M1–A72, H97–S462, and V483–P503. Over residues P41–A72 the composition is skewed to low complexity. Over residues H97–H107 the composition is skewed to basic and acidic residues. The span at Y184–Q197 shows a compositional bias: polar residues. S259 carries the phosphoserine modification. Low complexity predominate over residues L345 to A366. The segment at W401–S409 is sufficient for interaction with EZH2. The necessary and sufficient for inhibition of PRC2/EED-EZH1 and PRC2/EED-EZH2 complex activity stretch occupies residues A403–Q423. Residues S428 to P453 show a composition bias toward low complexity.

As to quaternary structure, interacts with PRC2/EED-EZH1 complex member EZH1 and with PRC2/EED-EZH2 complex member EZH2; the interaction blocks EZH1/EZH2 methyltransferase activity. Interacts (via C-terminus) with SUZ12 which is a member of the PRC2/EED-EZH1 and PRC2/EED-EZH2 complexes. In terms of tissue distribution, in testis, detected in male germ cells inside the seminiferous tubules, especially in spermatogonia and round spermatids (at protein level). In the ovary, expressed in primordial follicles and oocytes but not the external follicle cells (at protein level).

It localises to the nucleus. The protein localises to the cytoplasm. Its function is as follows. Inhibits PRC2/EED-EZH1 and PRC2/EED-EZH2 complex function by inhibiting EZH1/EZH2 methyltransferase activity, thereby causing down-regulation of histone H3 trimethylation on 'Lys-27' (H3K27me3). Probably inhibits methyltransferase activity by limiting the stimulatory effect of cofactors such as AEBP2 and JARID2. Inhibits H3K27me3 deposition during spermatogenesis and oogenesis. In Homo sapiens (Human), this protein is EZH inhibitory protein.